The chain runs to 291 residues: GTP-binding protein RHO4 (291 aa).

Positions 14-31 are enriched in polar residues; that stretch reads GNESNIVSQGSPSSSNLP. Residues 14–45 are disordered; the sequence is GNESNIVSQGSPSSSNLPESPGTLDEKNLPRL. GTP is bound at residue 79-86; the sequence is GDGAVGKT. An Effector region motif is present at residues 101 to 109; sequence YIPTIFENY. Residues 127–131 and 185–188 each bind GTP; these read DTAGQ and LKSD. The interval 250 to 273 is disordered; it reads THTIKNPFKRNTTRSDIDSSTGDT. A phosphoserine mark is found at Ser-264, Ser-268, and Ser-276. Cys-288 is subject to Cysteine methyl ester. Cys-288 carries the S-farnesyl cysteine lipid modification. Residues 289–291 constitute a propeptide, removed in mature form; the sequence is IIM.

It belongs to the small GTPase superfamily. Rho family. As to quaternary structure, interacts with BEM4.

The protein localises to the cell membrane. It catalyses the reaction GTP + H2O = GDP + phosphate + H(+). In terms of biological role, plays an important role in cell growth. Required to keep the uninucleated state. May be involved in the organization of the cytoskeleton which affects microtubule functions. Most likely RHO3 and RHO4 of S.cerevisiae regulate partially overlapping but different pathways. This Saccharomyces cerevisiae (strain ATCC 204508 / S288c) (Baker's yeast) protein is GTP-binding protein RHO4 (RHO4).